The primary structure comprises 610 residues: Sodium-coupled monocarboxylate transporter 1 (610 aa).

At M1–T9 the chain is on the extracellular side. The helical transmembrane segment at F10–I30 threads the bilayer. Topologically, residues Y31–R51 are cytoplasmic. The chain crosses the membrane as a helical span at residues M52–L72. Topologically, residues G73–A83 are extracellular. A helical transmembrane segment spans residues I84–L104. At P105 to T132 the chain is on the cytoplasmic side. Residues V133–A153 form a helical membrane-spanning segment. At L154–D161 the chain is on the extracellular side. A helical membrane pass occupies residues L162–L182. At K183–D189 the chain is on the cytoplasmic side. Residues V190–M210 traverse the membrane as a helical segment. Residues Q211 to R239 are Extracellular-facing. A helical membrane pass occupies residues H240–N260. The Cytoplasmic segment spans residues Q261 to S279. A helical membrane pass occupies residues L280–A300. Over L301 to G336 the chain is Extracellular. A helical membrane pass occupies residues L337–A359. Residues L360–S389 lie on the Cytoplasmic side of the membrane. A helical membrane pass occupies residues V390–L410. The Extracellular portion of the chain corresponds to Q411–S415. A helical transmembrane segment spans residues V416–F436. Residues A437–S439 lie on the Cytoplasmic side of the membrane. The helical transmembrane segment at I440 to A460 threads the bilayer. Topologically, residues Q461 to S518 are extracellular. N485 carries N-linked (GlcNAc...) asparagine glycosylation. A helical transmembrane segment spans residues L519–V539. The Cytoplasmic segment spans residues S540–L610. The disordered stretch occupies residues G585–L610. A compositionally biased stretch (polar residues) spans E596–L610. A PDZ-binding motif is present at residues T608–L610.

Belongs to the sodium:solute symporter (SSF) (TC 2.A.21) family. In terms of assembly, interacts (via PDZ-binding motif) with PDZK1 (via PDZ domains 1 and 3); interaction increases nicotinate transport activity of SLC5A8. As to expression, expressed in normal thyroid, localized at the apical pole of thyroid cells facing the colloid lumen, but expression profoundly decreased in thyroid carcinomas. Expressed in normal colon but absent in colon aberrant crypt foci and colon cancers. Present in normal kidney cortex, brain, prostate, gastric mucosa and breast tissue but was significantly down-regulated in primary gliomas, gastric cancer, prostate tumors and breast tumors.

The protein resides in the apical cell membrane. It carries out the reaction (S)-lactate(out) + 2 Na(+)(out) = (S)-lactate(in) + 2 Na(+)(in). The enzyme catalyses propanoate(out) + 2 Na(+)(out) = propanoate(in) + 2 Na(+)(in). It catalyses the reaction pyruvate(out) + 2 Na(+)(out) = pyruvate(in) + 2 Na(+)(in). The catalysed reaction is acetate(out) + 2 Na(+)(out) = acetate(in) + 2 Na(+)(in). It carries out the reaction butanoate(out) + 2 Na(+)(out) = butanoate(in) + 2 Na(+)(in). The enzyme catalyses nicotinate(out) + 2 Na(+)(out) = nicotinate(in) + 2 Na(+)(in). It catalyses the reaction (R)-3-hydroxybutanoate(out) + 2 Na(+)(out) = (R)-3-hydroxybutanoate(in) + 2 Na(+)(in). The catalysed reaction is acetoacetate(out) + 2 Na(+)(out) = acetoacetate(in) + 2 Na(+)(in). It carries out the reaction 4-methyl-2-oxopentanoate(out) + 2 Na(+)(out) = 4-methyl-2-oxopentanoate(in) + 2 Na(+)(in). The enzyme catalyses 5-oxo-L-proline(out) + 2 Na(+)(out) = 5-oxo-L-proline(in) + 2 Na(+)(in). It catalyses the reaction iodide(out) = iodide(in). The catalysed reaction is chloride(in) = chloride(out). It carries out the reaction nitrate(in) = nitrate(out). The enzyme catalyses bromide(in) = bromide(out). Its activity is regulated as follows. Increase of iodide influx inhibited by addition of perchlorate (NaClO(4)), a competitive inhibitor of iodide uptake catalyzed by sodium iodide symporter (NIS). Cotransport of monocarboxylates and nicotinate strongly inhibited by probenecid, nonsteroid anti-inflammatory drugs (ibuprofen, fenoprofen, ketprofen, naproxen) in a Na(+)-dependent manner or by prolonged exposure to external concentrations of monocarboxylates. In terms of biological role, acts as an electrogenic sodium (Na(+)) and chloride (Cl-)-dependent sodium-coupled solute transporter, including transport of monocarboxylates (short-chain fatty acids including L-lactate, D-lactate, pyruvate, acetate, propionate, valerate and butyrate), mocarboxylate drugs (nicotinate, benzoate, salicylate and 5-aminosalicylate) and ketone bodies (beta-D-hydroxybutyrate, acetoacetate and alpha-ketoisocaproate), with a Na(+):substrate stoichiometry of between 4:1 and 2:1. Catalyzes passive carrier mediated diffusion of iodide. Mediates iodide transport from the thyrocyte into the colloid lumen through the apical membrane. May be responsible for the absorption of D-lactate and monocarboxylate drugs from the intestinal tract. Acts as a tumor suppressor, suppressing colony formation in colon cancer, prostate cancer and glioma cell lines. May play a critical role in the entry of L-lactate and ketone bodies into neurons by a process driven by an electrochemical Na(+) gradient and hence contribute to the maintenance of the energy status and function of neurons. Mediates sodium-coupled electrogenic transport of pyroglutamate (5-oxo-L-proline). Can mediate the transport of chloride, bromide, iodide and nitrate ions when the external concentration of sodium ions is reduced. This is Sodium-coupled monocarboxylate transporter 1 from Homo sapiens (Human).